The primary structure comprises 525 residues: Endoglucanase 10 (525 aa).

Positions M1–A26 are cleaved as a signal peptide. Catalysis depends on D109, which acts as the Nucleophile. An N-linked (GlcNAc...) asparagine glycan is attached at N259. Residue H442 is part of the active site. Residues N464 and N484 are each glycosylated (N-linked (GlcNAc...) asparagine). Catalysis depends on residues D489 and E498.

The protein belongs to the glycosyl hydrolase 9 (cellulase E) family.

It is found in the secreted. The enzyme catalyses Endohydrolysis of (1-&gt;4)-beta-D-glucosidic linkages in cellulose, lichenin and cereal beta-D-glucans.. The protein is Endoglucanase 10 of Arabidopsis thaliana (Mouse-ear cress).